Reading from the N-terminus, the 176-residue chain is Large ribosomal subunit protein uL6 (176 aa).

It belongs to the universal ribosomal protein uL6 family. In terms of assembly, part of the 50S ribosomal subunit.

This protein binds to the 23S rRNA, and is important in its secondary structure. It is located near the subunit interface in the base of the L7/L12 stalk, and near the tRNA binding site of the peptidyltransferase center. The polypeptide is Large ribosomal subunit protein uL6 (Lactobacillus helveticus (strain DPC 4571)).